The sequence spans 384 residues: Succinyl-diaminopimelate desuccinylase (384 aa).

Zn(2+) is bound at residue His-72. Asp-74 is an active-site residue. Asp-105 is a Zn(2+) binding site. Glu-139 functions as the Proton acceptor in the catalytic mechanism. 3 residues coordinate Zn(2+): Glu-140, Glu-168, and His-355.

It belongs to the peptidase M20A family. DapE subfamily. As to quaternary structure, homodimer. The cofactor is Zn(2+). Co(2+) is required as a cofactor.

It carries out the reaction N-succinyl-(2S,6S)-2,6-diaminopimelate + H2O = (2S,6S)-2,6-diaminopimelate + succinate. It participates in amino-acid biosynthesis; L-lysine biosynthesis via DAP pathway; LL-2,6-diaminopimelate from (S)-tetrahydrodipicolinate (succinylase route): step 3/3. Its function is as follows. Catalyzes the hydrolysis of N-succinyl-L,L-diaminopimelic acid (SDAP), forming succinate and LL-2,6-diaminopimelate (DAP), an intermediate involved in the bacterial biosynthesis of lysine and meso-diaminopimelic acid, an essential component of bacterial cell walls. This chain is Succinyl-diaminopimelate desuccinylase, found in Blochmanniella pennsylvanica (strain BPEN).